A 112-amino-acid polypeptide reads, in one-letter code: Nitrogen regulatory protein GlnK2 (112 aa).

ADP-binding positions include threonine 29, 37-39 (GVQ), valine 64, and 87-90 (GDGK). ATP-binding positions include threonine 29, 37 to 39 (GVQ), valine 64, and 87 to 90 (GDGK).

Belongs to the P(II) protein family. Homotrimer. Interacts and forms a complex with Amt2.

The protein localises to the cytoplasm. Its function is as follows. Involved in the regulation of nitrogen metabolism. Regulates the activity of its targets by protein-protein interaction in response to the nitrogen status of the cell. Regulates the activity of the ammonia channel Amt2 via direct interaction. This is Nitrogen regulatory protein GlnK2 from Methanocaldococcus jannaschii (strain ATCC 43067 / DSM 2661 / JAL-1 / JCM 10045 / NBRC 100440) (Methanococcus jannaschii).